Reading from the N-terminus, the 597-residue chain is Aspartate--tRNA(Asp/Asn) ligase (597 aa).

Glutamate 175 provides a ligand contact to L-aspartate. The tract at residues 199–202 is aspartate; it reads QQYK. 2 residues coordinate L-aspartate: arginine 221 and histidine 454. Residue 221-223 coordinates ATP; the sequence is RDE. Residue glutamate 488 participates in ATP binding. Arginine 495 is an L-aspartate binding site. ATP is bound at residue 540–543; that stretch reads GVDR.

It belongs to the class-II aminoacyl-tRNA synthetase family. Type 1 subfamily. As to quaternary structure, homodimer.

The protein resides in the cytoplasm. The enzyme catalyses tRNA(Asx) + L-aspartate + ATP = L-aspartyl-tRNA(Asx) + AMP + diphosphate. In terms of biological role, aspartyl-tRNA synthetase with relaxed tRNA specificity since it is able to aspartylate not only its cognate tRNA(Asp) but also tRNA(Asn). Reaction proceeds in two steps: L-aspartate is first activated by ATP to form Asp-AMP and then transferred to the acceptor end of tRNA(Asp/Asn). This is Aspartate--tRNA(Asp/Asn) ligase from Bartonella quintana (strain Toulouse) (Rochalimaea quintana).